We begin with the raw amino-acid sequence, 237 residues long: MGGCDPMDEAARGALDLLGRIGGELGVLGVGTGRTVMRFLREASARGVEPGVAVPSSFETAVELAGLGWSVGDPRVYRGVNVYVDGADEAEPGRGYMVKGGGGALLGEKILSSRSKLNIFIVGEDRLVGRLGEKTPVPVEVEPGFVSMVLASLEELGLNPRVRTSPGKRGPVVSDWGGVIVDLLTGPLEDPRGLESMLRNVPGVRETGLFLGLADYIVVGLSSCGYRVLGPYRGRAV.

Residues 32–35 (TGRT), 85–88 (DGAD), and 99–102 (KGGG) each bind substrate. Residue glutamate 108 is the Proton acceptor of the active site. Arginine 126 contacts substrate.

Belongs to the ribose 5-phosphate isomerase family. In terms of assembly, homodimer.

The enzyme catalyses aldehydo-D-ribose 5-phosphate = D-ribulose 5-phosphate. It functions in the pathway carbohydrate degradation; pentose phosphate pathway; D-ribose 5-phosphate from D-ribulose 5-phosphate (non-oxidative stage): step 1/1. Catalyzes the reversible conversion of ribose-5-phosphate to ribulose 5-phosphate. The polypeptide is Ribose-5-phosphate isomerase A (Aeropyrum pernix (strain ATCC 700893 / DSM 11879 / JCM 9820 / NBRC 100138 / K1)).